Consider the following 180-residue polypeptide: Probable phospholipid hydroperoxide glutathione peroxidase (180 aa).

The active site involves Cys-54.

Belongs to the glutathione peroxidase family.

It localises to the cytoplasm. It catalyses the reaction a hydroperoxy polyunsaturated fatty acid + 2 glutathione = a hydroxy polyunsaturated fatty acid + glutathione disulfide + H2O. In terms of biological role, protects cells and enzymes from oxidative damage, by catalyzing the reduction of hydrogen peroxide, lipid peroxides and organic hydroperoxide, by glutathione. The protein is Probable phospholipid hydroperoxide glutathione peroxidase (GPXHA-2) of Helianthus annuus (Common sunflower).